A 425-amino-acid polypeptide reads, in one-letter code: Serine hydroxymethyltransferase (425 aa).

(6S)-5,6,7,8-tetrahydrofolate contacts are provided by residues Leu-128 and 132 to 134 (GHL). Lys-237 is modified (N6-(pyridoxal phosphate)lysine).

Belongs to the SHMT family. As to quaternary structure, homodimer. Requires pyridoxal 5'-phosphate as cofactor.

The protein resides in the cytoplasm. The enzyme catalyses (6R)-5,10-methylene-5,6,7,8-tetrahydrofolate + glycine + H2O = (6S)-5,6,7,8-tetrahydrofolate + L-serine. The protein operates within one-carbon metabolism; tetrahydrofolate interconversion. It functions in the pathway amino-acid biosynthesis; glycine biosynthesis; glycine from L-serine: step 1/1. In terms of biological role, catalyzes the reversible interconversion of serine and glycine with tetrahydrofolate (THF) serving as the one-carbon carrier. This reaction serves as the major source of one-carbon groups required for the biosynthesis of purines, thymidylate, methionine, and other important biomolecules. Also exhibits THF-independent aldolase activity toward beta-hydroxyamino acids, producing glycine and aldehydes, via a retro-aldol mechanism. The sequence is that of Serine hydroxymethyltransferase from Wolbachia sp. subsp. Drosophila simulans (strain wRi).